The following is a 715-amino-acid chain: Fatty acid oxidation complex subunit alpha (715 aa).

The segment at 1–190 (MTTTSAFMLN…KAGLVDDVVP (190 aa)) is enoyl-CoA hydratase. Residues 306–715 (GPLNSVGILG…WTNGETDQGN (410 aa)) form a 3-hydroxyacyl-CoA dehydrogenase region.

In the N-terminal section; belongs to the enoyl-CoA hydratase/isomerase family. The protein in the central section; belongs to the 3-hydroxyacyl-CoA dehydrogenase family. In terms of assembly, heterotetramer of two alpha chains (FadJ) and two beta chains (FadI).

It is found in the cytoplasm. The enzyme catalyses a (3S)-3-hydroxyacyl-CoA = a (2E)-enoyl-CoA + H2O. The catalysed reaction is a 4-saturated-(3S)-3-hydroxyacyl-CoA = a (3E)-enoyl-CoA + H2O. It catalyses the reaction a (3S)-3-hydroxyacyl-CoA + NAD(+) = a 3-oxoacyl-CoA + NADH + H(+). It carries out the reaction (3S)-3-hydroxybutanoyl-CoA = (3R)-3-hydroxybutanoyl-CoA. It functions in the pathway lipid metabolism; fatty acid beta-oxidation. Its function is as follows. Catalyzes the formation of a hydroxyacyl-CoA by addition of water on enoyl-CoA. Also exhibits 3-hydroxyacyl-CoA epimerase and 3-hydroxyacyl-CoA dehydrogenase activities. The protein is Fatty acid oxidation complex subunit alpha of Salmonella enteritidis PT4 (strain P125109).